Here is a 189-residue protein sequence, read N- to C-terminus: Alkyl hydroperoxide reductase C (189 aa).

In terms of domain architecture, Thioredoxin spans 2–159; the sequence is SLINKEILPF…LVNKIKAAQY (158 aa). C49 (cysteine sulfenic acid (-SOH) intermediate) is an active-site residue.

It belongs to the peroxiredoxin family. AhpC/Prx1 subfamily. Homodimer; disulfide-linked, upon oxidation. 5 homodimers assemble to form a ring-like decamer.

It localises to the cytoplasm. The enzyme catalyses a hydroperoxide + NADH + H(+) = an alcohol + NAD(+) + H2O. Thiol-specific peroxidase that catalyzes the reduction of hydrogen peroxide and organic hydroperoxides to water and alcohols, respectively. Plays a role in cell protection against oxidative stress by detoxifying peroxides. In Staphylococcus epidermidis (strain ATCC 12228 / FDA PCI 1200), this protein is Alkyl hydroperoxide reductase C (ahpC).